The primary structure comprises 256 residues: Signal peptidase I (256 aa).

Active-site residues include Ser32 and Lys75.

The protein belongs to the peptidase S26 family.

The enzyme catalyses Cleavage of hydrophobic, N-terminal signal or leader sequences from secreted and periplasmic proteins.. This chain is Signal peptidase I (lepB), found in Aquifex aeolicus (strain VF5).